Consider the following 134-residue polypeptide: Large ribosomal subunit protein uL18 (134 aa).

This sequence belongs to the universal ribosomal protein uL18 family. As to quaternary structure, part of the 50S ribosomal subunit; part of the 5S rRNA/L5/L18/L25 subcomplex. Contacts the 5S and 23S rRNAs.

In terms of biological role, this is one of the proteins that bind and probably mediate the attachment of the 5S RNA into the large ribosomal subunit, where it forms part of the central protuberance. The sequence is that of Large ribosomal subunit protein uL18 from Corynebacterium efficiens (strain DSM 44549 / YS-314 / AJ 12310 / JCM 11189 / NBRC 100395).